The chain runs to 434 residues: 4-hydroxy-3-methylbut-2-en-1-yl diphosphate synthase (flavodoxin) (434 aa).

The span at 1–15 (MQSEAQSPRSSQICS) shows a compositional bias: polar residues. A disordered region spans residues 1 to 24 (MQSEAQSPRSSQICSTEPVFGGHQ). [4Fe-4S] cluster is bound by residues Cys-322, Cys-325, Cys-368, and Glu-375.

It belongs to the IspG family. It depends on [4Fe-4S] cluster as a cofactor.

It carries out the reaction (2E)-4-hydroxy-3-methylbut-2-enyl diphosphate + oxidized [flavodoxin] + H2O + 2 H(+) = 2-C-methyl-D-erythritol 2,4-cyclic diphosphate + reduced [flavodoxin]. The protein operates within isoprenoid biosynthesis; isopentenyl diphosphate biosynthesis via DXP pathway; isopentenyl diphosphate from 1-deoxy-D-xylulose 5-phosphate: step 5/6. In terms of biological role, converts 2C-methyl-D-erythritol 2,4-cyclodiphosphate (ME-2,4cPP) into 1-hydroxy-2-methyl-2-(E)-butenyl 4-diphosphate. This is 4-hydroxy-3-methylbut-2-en-1-yl diphosphate synthase (flavodoxin) from Burkholderia cenocepacia (strain ATCC BAA-245 / DSM 16553 / LMG 16656 / NCTC 13227 / J2315 / CF5610) (Burkholderia cepacia (strain J2315)).